The following is a 134-amino-acid chain: MNRRRGILFALASVLLVSVAQLSMRWSMTRLPRPDQWLSVPSVDSVALAVVLAAIFAYALSMLCWLAALRDLPLGRAYSLLSISYALVYLLAASLPLFNESFSFSKSLGVALVMLGVITINTRPARAPELRSSP.

At 1–5 (MNRRR) the chain is on the cytoplasmic side. Residues 6–26 (GILFALASVLLVSVAQLSMRW) traverse the membrane as a helical segment. The Periplasmic segment spans residues 27–45 (SMTRLPRPDQWLSVPSVDS). The chain crosses the membrane as a helical span at residues 46–66 (VALAVVLAAIFAYALSMLCWL). The Cytoplasmic segment spans residues 67–77 (AALRDLPLGRA). Residues 78–98 (YSLLSISYALVYLLAASLPLF) traverse the membrane as a helical segment. At 99 to 101 (NES) the chain is on the periplasmic side. A helical transmembrane segment spans residues 102-122 (FSFSKSLGVALVMLGVITINT). Over 123 to 134 (RPARAPELRSSP) the chain is Cytoplasmic.

Belongs to the ArnF family. Heterodimer of ArnE and ArnF.

It is found in the cell inner membrane. It functions in the pathway bacterial outer membrane biogenesis; lipopolysaccharide biosynthesis. In terms of biological role, translocates 4-amino-4-deoxy-L-arabinose-phosphoundecaprenol (alpha-L-Ara4N-phosphoundecaprenol) from the cytoplasmic to the periplasmic side of the inner membrane. This chain is Probable 4-amino-4-deoxy-L-arabinose-phosphoundecaprenol flippase subunit ArnF, found in Pseudomonas fluorescens (strain Pf0-1).